The sequence spans 175 residues: ATP synthase subunit delta (175 aa).

Belongs to the ATPase delta chain family. As to quaternary structure, F-type ATPases have 2 components, F(1) - the catalytic core - and F(0) - the membrane proton channel. F(1) has five subunits: alpha(3), beta(3), gamma(1), delta(1), epsilon(1). F(0) has three main subunits: a(1), b(2) and c(10-14). The alpha and beta chains form an alternating ring which encloses part of the gamma chain. F(1) is attached to F(0) by a central stalk formed by the gamma and epsilon chains, while a peripheral stalk is formed by the delta and b chains.

The protein resides in the cell inner membrane. In terms of biological role, f(1)F(0) ATP synthase produces ATP from ADP in the presence of a proton or sodium gradient. F-type ATPases consist of two structural domains, F(1) containing the extramembraneous catalytic core and F(0) containing the membrane proton channel, linked together by a central stalk and a peripheral stalk. During catalysis, ATP synthesis in the catalytic domain of F(1) is coupled via a rotary mechanism of the central stalk subunits to proton translocation. Functionally, this protein is part of the stalk that links CF(0) to CF(1). It either transmits conformational changes from CF(0) to CF(1) or is implicated in proton conduction. In Sulfurovum sp. (strain NBC37-1), this protein is ATP synthase subunit delta.